The primary structure comprises 84 residues: Acyl carrier protein (84 aa).

Positions 1-75 (MIFQKIQEFI…DILEYIQQHV (75 aa)) constitute a Carrier domain. At S35 the chain carries O-(pantetheine 4'-phosphoryl)serine.

It belongs to the acyl carrier protein (ACP) family. Post-translationally, 4'-phosphopantetheine is transferred from CoA to a specific serine of apo-ACP by AcpS. This modification is essential for activity because fatty acids are bound in thioester linkage to the sulfhydryl of the prosthetic group.

It is found in the cytoplasm. Its pathway is lipid metabolism; fatty acid biosynthesis. Its function is as follows. Carrier of the growing fatty acid chain in fatty acid biosynthesis. This Phytoplasma mali (strain AT) protein is Acyl carrier protein.